Consider the following 454-residue polypeptide: Apyrase (454 aa).

At methionine 1 to histidine 7 the chain is on the cytoplasmic side. A helical; Signal-anchor for type II membrane protein transmembrane segment spans residues phenylalanine 8–valine 28. Topologically, residues asparagine 29–serine 454 are extracellular. ATP is bound at residue valine 48–arginine 58. N-linked (GlcNAc...) asparagine glycosylation is present at asparagine 151. Glutamate 170 acts as the Proton acceptor in catalysis. Alanine 194–glutamine 204 lines the ATP pocket. A glycan (N-linked (GlcNAc...) asparagine) is linked at asparagine 262.

Belongs to the GDA1/CD39 NTPase family. Ca(2+) is required as a cofactor. In terms of processing, the N-terminus is blocked.

The protein resides in the membrane. The enzyme catalyses a ribonucleoside 5'-triphosphate + 2 H2O = a ribonucleoside 5'-phosphate + 2 phosphate + 2 H(+). In terms of biological role, catalyzes the hydrolysis of phosphoanhydride bonds of nucleoside tri- and di-phosphates. The sequence is that of Apyrase (RROP1) from Solanum tuberosum (Potato).